A 133-amino-acid polypeptide reads, in one-letter code: ATP synthase epsilon chain, chloroplastic (133 aa).

This sequence belongs to the ATPase epsilon chain family. As to quaternary structure, F-type ATPases have 2 components, CF(1) - the catalytic core - and CF(0) - the membrane proton channel. CF(1) has five subunits: alpha(3), beta(3), gamma(1), delta(1), epsilon(1). CF(0) has three main subunits: a, b and c.

The protein resides in the plastid. It is found in the chloroplast thylakoid membrane. Its function is as follows. Produces ATP from ADP in the presence of a proton gradient across the membrane. This chain is ATP synthase epsilon chain, chloroplastic, found in Phaeodactylum tricornutum (strain CCAP 1055/1).